Consider the following 281-residue polypeptide: 3'-5' exonuclease Snipper (281 aa).

The segment at 19–52 is disordered; the sequence is DGARPDPNNDPEESFNEDEVTEANSVPAKSKKSR. Over residues 27–39 the composition is skewed to acidic residues; sequence NDPEESFNEDEVT. An Exonuclease domain is found at 64-262; sequence YVIAVDFEAT…MCKMVRDGAL (199 aa). Residues D69 and E71 each contribute to the Mg(2+) site. E71 serves as the catalytic Proton acceptor. 2 residues coordinate AMP: E71 and A72. D183 lines the Mg(2+) pocket. H240 functions as the Proton acceptor in the catalytic mechanism. Residue H240 participates in AMP binding. D245 is a binding site for Mg(2+).

This sequence belongs to the ERI2 family. It depends on Mg(2+) as a cofactor.

The protein localises to the cytoplasm. It is found in the nucleus. Its subcellular location is the nucleolus. A broad-specificity exonuclease, capable of degrading both structure-specific DNA and RNA targets without sequence specificity in vitro. Requires two to five unpaired nucleotides in the 3' region for efficient binding and nuclease activity. Binds with higher affinity to RNA and DNA stem-loop substrates compared to single-stranded substrate. Binds to the 3'-end of histone mRNAs and degrades them, suggesting that it might play a role in histone mRNA decay after replication. Can readily cleave the histone stem-loop RNA beyond the -12 (UUU) position in the loop to produce -14 and then -16 oligonucleotide fragments for both the stem-loop and the reverse stem-loop. Cleaves both the single-stranded 3' flank as well as the double-stranded stem portion of histone stem-loop RNA. Might affect histone mRNA 3' processing thereby regulating histone protein expression. Has an important role in development and tissue formation. Might have a role in 5.8S rRNA precursor processing. The chain is 3'-5' exonuclease Snipper from Drosophila melanogaster (Fruit fly).